Reading from the N-terminus, the 192-residue chain is Adenylate kinase (192 aa).

An ATP-binding site is contributed by 10–18 (GVPGVGGTT).

This sequence belongs to the archaeal adenylate kinase family. In terms of assembly, monomer.

It is found in the cytoplasm. It catalyses the reaction AMP + ATP = 2 ADP. The sequence is that of Adenylate kinase from Methanococcus maripaludis (strain C5 / ATCC BAA-1333).